Here is a 224-residue protein sequence, read N- to C-terminus: Thymidylate kinase (224 aa).

7–14 contributes to the ATP binding site; sequence GIEGSGKS.

This sequence belongs to the thymidylate kinase family.

It carries out the reaction dTMP + ATP = dTDP + ADP. Functionally, phosphorylation of dTMP to form dTDP in both de novo and salvage pathways of dTTP synthesis. This is Thymidylate kinase from Nitratidesulfovibrio vulgaris (strain DP4) (Desulfovibrio vulgaris).